The following is a 257-amino-acid chain: Uroporphyrinogen-III C-methyltransferase (257 aa).

S-adenosyl-L-homocysteine contacts are provided by residues proline 11, 87–89 (GGD), 117–118 (TS), and methionine 170.

This sequence belongs to the precorrin methyltransferase family.

It catalyses the reaction uroporphyrinogen III + 2 S-adenosyl-L-methionine = precorrin-2 + 2 S-adenosyl-L-homocysteine + H(+). The protein operates within cofactor biosynthesis; adenosylcobalamin biosynthesis; precorrin-2 from uroporphyrinogen III: step 1/1. It functions in the pathway porphyrin-containing compound metabolism; siroheme biosynthesis; precorrin-2 from uroporphyrinogen III: step 1/1. Catalyzes the two successive C-2 and C-7 methylation reactions involved in the conversion of uroporphyrinogen III to precorrin-2 via the intermediate formation of precorrin-1. It is a step in the biosynthesis of both cobalamin (vitamin B12) and siroheme. This Bacillus subtilis (strain 168) protein is Uroporphyrinogen-III C-methyltransferase (sumT).